A 159-amino-acid chain; its full sequence is S-ribosylhomocysteine lyase (159 aa).

Fe cation is bound by residues His-53, His-57, and Cys-124.

This sequence belongs to the LuxS family. In terms of assembly, homodimer. Requires Fe cation as cofactor.

The enzyme catalyses S-(5-deoxy-D-ribos-5-yl)-L-homocysteine = (S)-4,5-dihydroxypentane-2,3-dione + L-homocysteine. In terms of biological role, involved in the synthesis of autoinducer 2 (AI-2) which is secreted by bacteria and is used to communicate both the cell density and the metabolic potential of the environment. The regulation of gene expression in response to changes in cell density is called quorum sensing. Catalyzes the transformation of S-ribosylhomocysteine (RHC) to homocysteine (HC) and 4,5-dihydroxy-2,3-pentadione (DPD). This chain is S-ribosylhomocysteine lyase, found in Porphyromonas gingivalis (strain ATCC 33277 / DSM 20709 / CIP 103683 / JCM 12257 / NCTC 11834 / 2561).